A 290-amino-acid polypeptide reads, in one-letter code: ATP synthase gamma chain (290 aa).

Belongs to the ATPase gamma chain family. In terms of assembly, F-type ATPases have 2 components, CF(1) - the catalytic core - and CF(0) - the membrane proton channel. CF(1) has five subunits: alpha(3), beta(3), gamma(1), delta(1), epsilon(1). CF(0) has three main subunits: a, b and c.

Its subcellular location is the cell inner membrane. Its function is as follows. Produces ATP from ADP in the presence of a proton gradient across the membrane. The gamma chain is believed to be important in regulating ATPase activity and the flow of protons through the CF(0) complex. This is ATP synthase gamma chain from Bacteroides fragilis (strain ATCC 25285 / DSM 2151 / CCUG 4856 / JCM 11019 / LMG 10263 / NCTC 9343 / Onslow / VPI 2553 / EN-2).